The primary structure comprises 110 residues: uncharacterized protein (110 aa).

A helical transmembrane segment spans residues glycine 29–leucine 49.

The protein resides in the membrane. This is an uncharacterized protein from Saccharomyces cerevisiae (strain ATCC 204508 / S288c) (Baker's yeast).